The sequence spans 313 residues: Guanine nucleotide-binding protein-like 3-like protein (313 aa).

A compositionally biased stretch (basic residues) spans 1–14 (MGIKKKRQSKRLTT). The interval 1–41 (MGIKKKRQSKRLTTRKREGMLKRARANERKKRRMDRKMQAK) is disordered. Over residues 15 to 27 (RKREGMLKRARAN) the composition is skewed to basic and acidic residues. GTP-binding positions include 95–98 (SKSD), 178–185 (GNPGSGKN), and 212–215 (TLSS).

The protein belongs to the MMR1/HSR1 GTP-binding protein family.

It localises to the nucleus. The protein localises to the nucleolus. In terms of biological role, required for normal processing of ribosomal pre-rRNA. Required for cell proliferation. Binds GTP. This chain is Guanine nucleotide-binding protein-like 3-like protein, found in Encephalitozoon cuniculi (strain GB-M1) (Microsporidian parasite).